We begin with the raw amino-acid sequence, 204 residues long: Quinol oxidase subunit 3 (204 aa).

5 helical membrane-spanning segments follow: residues 27–47, 66–86, 95–115, 140–160, and 184–204; these read FWIF…TFFV, LVMI…IAVH, GVVI…GCEI, LLGT…GILI, and FLDV…LGGL.

Belongs to the cytochrome c oxidase subunit 3 family.

It is found in the cell membrane. It catalyses the reaction 2 a quinol + O2 = 2 a quinone + 2 H2O. Functionally, catalyzes quinol oxidation with the concomitant reduction of oxygen to water. Major component for energy conversion during vegetative growth. The protein is Quinol oxidase subunit 3 (qoxC) of Bacillus spizizenii (strain ATCC 23059 / NRRL B-14472 / W23) (Bacillus subtilis subsp. spizizenii).